The chain runs to 77 residues: Small, acid-soluble spore protein Tlp (77 aa).

This sequence belongs to the Tlp family.

Its subcellular location is the spore core. The polypeptide is Small, acid-soluble spore protein Tlp (Geobacillus sp. (strain WCH70)).